A 384-amino-acid chain; its full sequence is 4-hydroxy-3-methylbut-2-en-1-yl diphosphate synthase (flavodoxin) (384 aa).

[4Fe-4S] cluster contacts are provided by C280, C283, C315, and E322.

It belongs to the IspG family. Requires [4Fe-4S] cluster as cofactor.

The enzyme catalyses (2E)-4-hydroxy-3-methylbut-2-enyl diphosphate + oxidized [flavodoxin] + H2O + 2 H(+) = 2-C-methyl-D-erythritol 2,4-cyclic diphosphate + reduced [flavodoxin]. The protein operates within isoprenoid biosynthesis; isopentenyl diphosphate biosynthesis via DXP pathway; isopentenyl diphosphate from 1-deoxy-D-xylulose 5-phosphate: step 5/6. Its function is as follows. Converts 2C-methyl-D-erythritol 2,4-cyclodiphosphate (ME-2,4cPP) into 1-hydroxy-2-methyl-2-(E)-butenyl 4-diphosphate. The protein is 4-hydroxy-3-methylbut-2-en-1-yl diphosphate synthase (flavodoxin) of Parafrankia sp. (strain EAN1pec).